The sequence spans 105 residues: MARLLLRRGFFSSHIRMSSDQLGELGTGAGKGGGGGGSVRAAGGSFGRREAAEEERYFRQKEREQLAALKNHHEEEIDHHKKEIERLQREIDRHKGKIRKLKHDD.

The segment at 17–52 (MSSDQLGELGTGAGKGGGGGGSVRAAGGSFGRREAA) is disordered. Residues 22 to 51 (LGELGTGAGKGGGGGGSVRAAGGSFGRREA) form an N-terminal inhibitory region region. Residues 25–38 (LGTGAGKGGGGGGS) show a composition bias toward gly residues. Residues 58–105 (FRQKEREQLAALKNHHEEEIDHHKKEIERLQREIDRHKGKIRKLKHDD) adopt a coiled-coil conformation. Residues 73–105 (HEEEIDHHKKEIERLQREIDRHKGKIRKLKHDD) are antiparallel alpha-helical coiled coil region.

It belongs to the ATPase inhibitor family. Homodimer; represents the active form and is present at a pH value below 6.5. Homotetramer; represents the inactive form and is present at a pH value above 7.0.

It localises to the mitochondrion. In terms of biological role, endogenous F(1)F(o)-ATPase inhibitor limiting ATP depletion when the mitochondrial membrane potential falls below a threshold and the F(1)F(o)-ATP synthase starts hydrolyzing ATP to pump protons out of the mitochondrial matrix. Required to avoid the consumption of cellular ATP when the F(1)F(o)-ATP synthase enzyme acts as an ATP hydrolase. Indirectly acts as a regulator of heme synthesis in erythroid tissues: regulates heme synthesis by modulating the mitochondrial pH and redox potential, allowing fech to efficiently catalyze the incorporation of iron into protoporphyrin IX to produce heme. This is ATPase inhibitor A, mitochondrial from Danio rerio (Zebrafish).